Reading from the N-terminus, the 122-residue chain is High-potential iron-sulfur protein (122 aa).

The first 37 residues, 1 to 37 (MSDKPISKSRRDAVKVMLGTAAAIPMINLVGFGTARA), serve as a signal peptide directing secretion. The [4Fe-4S] cluster site is built by Cys-80, Cys-83, Cys-100, and Cys-114.

It belongs to the high-potential iron-sulfur protein (HiPIP) family. In terms of assembly, homodimer.

The protein resides in the periplasm. Its function is as follows. Specific class of high-redox-potential 4Fe-4S ferredoxins. Functions in anaerobic electron transport in most purple and in some other photosynthetic bacteria and in at least one genus (Paracoccus) of halophilic, denitrifying bacteria. The chain is High-potential iron-sulfur protein (hip) from Allochromatium vinosum (strain ATCC 17899 / DSM 180 / NBRC 103801 / NCIMB 10441 / D) (Chromatium vinosum).